The primary structure comprises 3078 residues: Probable polyketide synthase 34 (3078 aa).

In terms of domain architecture, Ketosynthase family 3 (KS3) spans 28–462; sequence SGDVAVIGIG…GSNVCLILSE (435 aa). Catalysis depends on for beta-ketoacyl synthase activity residues Cys200, His339, and His385. The interval 665 to 698 is acyl/malonyl transferase; it reads GVSADIIIGHSLGEISSSYCSGIIDFQTLCYLTY. The active-site For acyl/malonyl transferase activity is the Ser675. The segment at 954-1083 is N-terminal hotdog fold; it reads HEKIKNEGPS…GNFSLTKHNI (130 aa). Positions 954-1264 constitute a PKS/mFAS DH domain; the sequence is HEKIKNEGPS…CTIVGSNPDS (311 aa). His995 acts as the Proton acceptor; for dehydratase activity in catalysis. A C-terminal hotdog fold region spans residues 1099 to 1264; that stretch reads NFTSISKQDL…CTIVGSNPDS (166 aa). Asp1171 acts as the Proton donor; for dehydratase activity in catalysis. The disordered stretch occupies residues 1375 to 1396; that stretch reads NINNNNNNNNNNNNNNNNNSNG. Residues 2541–2618 enclose the Carrier domain; the sequence is DNNEIIRSTI…QSIEIIKSAH (78 aa). An O-(pantetheine 4'-phosphoryl)serine modification is found at Ser2578. 2 disordered regions span residues 2617 to 2640 and 2739 to 2761; these read AHNN…NNNN and NKGS…DNNS. Low complexity predominate over residues 2619–2640; the sequence is NNNNNNNNNNNNNNNNNNNNNN. A coiled-coil region spans residues 2621-2652; it reads NNNNNNNNNNNNNNNNNNNNLVKKEQQSLDEF.

It depends on pantetheine 4'-phosphate as a cofactor.

Probable polyketide synthase. In Dictyostelium discoideum (Social amoeba), this protein is Probable polyketide synthase 34 (pks34).